We begin with the raw amino-acid sequence, 157 residues long: Mitochondrial inner membrane protease subunit 1 (157 aa).

Catalysis depends on residues S35 and K80.

The protein belongs to the peptidase S26 family. IMP1 subfamily. In terms of assembly, heterodimer of 2 subunits, imp1 and imp2.

It is found in the mitochondrion inner membrane. Functionally, catalyzes the removal of transit peptides required for the targeting of proteins from the mitochondrial matrix, across the inner membrane, into the inter-membrane space. The protein is Mitochondrial inner membrane protease subunit 1 (imp1) of Schizosaccharomyces pombe (strain 972 / ATCC 24843) (Fission yeast).